The chain runs to 283 residues: ATP phosphoribosyltransferase (283 aa).

It belongs to the ATP phosphoribosyltransferase family. Long subfamily. Requires Mg(2+) as cofactor.

The protein localises to the cytoplasm. The catalysed reaction is 1-(5-phospho-beta-D-ribosyl)-ATP + diphosphate = 5-phospho-alpha-D-ribose 1-diphosphate + ATP. The protein operates within amino-acid biosynthesis; L-histidine biosynthesis; L-histidine from 5-phospho-alpha-D-ribose 1-diphosphate: step 1/9. Its activity is regulated as follows. Feedback inhibited by histidine. Its function is as follows. Catalyzes the condensation of ATP and 5-phosphoribose 1-diphosphate to form N'-(5'-phosphoribosyl)-ATP (PR-ATP). Has a crucial role in the pathway because the rate of histidine biosynthesis seems to be controlled primarily by regulation of HisG enzymatic activity. This Methanopyrus kandleri (strain AV19 / DSM 6324 / JCM 9639 / NBRC 100938) protein is ATP phosphoribosyltransferase.